Reading from the N-terminus, the 274-residue chain is Outer surface protein A (274 aa).

The N-terminal stretch at 1-16 (MKKYLLGIGLILALIA) is a signal peptide. The N-palmitoyl cysteine moiety is linked to residue Cys-17. Residue Cys-17 is the site of S-diacylglycerol cysteine attachment.

Belongs to the OspA lipoprotein family.

It localises to the cell outer membrane. It is found in the cell surface. The protein is Outer surface protein A of Borreliella burgdorferi (Lyme disease spirochete).